A 180-amino-acid polypeptide reads, in one-letter code: Signal peptidase complex subunit 3 (180 aa).

Residues 1-12 are Cytoplasmic-facing; it reads MHNLLSRANALL. A helical; Signal-anchor for type II membrane protein transmembrane segment spans residues 13–33; it reads AFTLWVMAAVTAACFLSTVFL. Over 34 to 180 the chain is Lumenal; that stretch reads DYTVPTKLTV…PTTYTTTRRS (147 aa). A glycan (N-linked (GlcNAc...) asparagine) is linked at Asn-141.

The protein belongs to the SPCS3 family. As to quaternary structure, component of the signal peptidase complex (SPC) composed of a catalytic subunit sec-11 and three accessory subunits spcs-1, spcs-2 and spcs-3. The complex induces a local thinning of the ER membrane which is used to measure the length of the signal peptide (SP) h-region of protein substrates. This ensures the selectivity of the complex towards h-regions shorter than 18-20 amino acids.

It is found in the endoplasmic reticulum membrane. Functionally, essential component of the signal peptidase complex (SPC) which catalyzes the cleavage of N-terminal signal sequences from nascent proteins as they are translocated into the lumen of the endoplasmic reticulum. Essential for the SPC catalytic activity, possibly by stabilizing and positioning the active center of the complex close to the lumenal surface. The polypeptide is Signal peptidase complex subunit 3 (Caenorhabditis elegans).